A 629-amino-acid polypeptide reads, in one-letter code: MEYHGGSYDVIVIGAGHAGCEAALASARIGAKTLVITLNLDMIAFMPCNPSIGGPAKGIVVREIDALGGEMGKNIDKTYIQIRMLNTGKGPAVRALRAQADKVLYQREMKKTLENQKNLTLLQGKVERLIVEDGVCKGVITQTGAHYYAKAVVITTGTFLRGEIIIGDIKYSSGPNNQQPSIKLSEHLEELGFELVRFKTGTPPRVNSRTIDYSKTEIQPGDEEPRAFSYETTKYITDQLPCWLTYTTEETHRIIDENLHLSPMYSGMIKGTGPRYCPSIEDKVVRFHDKPRHQIFLEPEGRETEEVYVQGLSTSLPEHIQRKLLETIPGLEKAQLMRAGYAIEYDAIVPTQLWPTLETKLVKNLYTAGQINGTSGYEEAAGQGIMAGINAAHRALGREEIILSRSDAYIGVLIDDLVTKGTNEPYRLLTSRAEYRLLLRHDNADLRLTELGYRIGLISEERYQAFLAKKEAIEREKKRLQTVIIKPTPEVQEVIRQAGGSELKDGIRAADLLRRPEMTYEHIQKLAPADEDIAPEVAEQVEIQIKYEGYIQKSLQEVERLKKMENKKIPEDIDYDAIQGLATEARQKLKQVRPLSIAQASRISGVNPADISILLVYLEQGRIARVSNE.

FAD-binding positions include 14–19, Val-126, and Ser-181; that span reads GAGHAG. 273–287 contributes to the NAD(+) binding site; that stretch reads GPRYCPSIEDKVVRF. Gln-370 lines the FAD pocket.

The protein belongs to the MnmG family. In terms of assembly, homodimer. Heterotetramer of two MnmE and two MnmG subunits. FAD is required as a cofactor.

It is found in the cytoplasm. Functionally, NAD-binding protein involved in the addition of a carboxymethylaminomethyl (cmnm) group at the wobble position (U34) of certain tRNAs, forming tRNA-cmnm(5)s(2)U34. This chain is tRNA uridine 5-carboxymethylaminomethyl modification enzyme MnmG, found in Geobacillus thermodenitrificans (strain NG80-2).